Consider the following 293-residue polypeptide: DNA repair protein RecO (293 aa).

This sequence belongs to the RecO family.

Its function is as follows. Involved in DNA repair and RecF pathway recombination. This chain is DNA repair protein RecO, found in Cyanothece sp. (strain PCC 7425 / ATCC 29141).